The chain runs to 919 residues: MTDPKVPRQRRIIDRRKLAAAVEALAEQQGEKARPAVLKVLREALEKGRDELSQRLLDRPSAGHQITAGHAFLVDQLVRVIFDHVTTHLYPVANRSSSERIAVLAVGGYGRAEMAPQSDVDIAFLHPSRRTPWCEQVTEAMLYFLWDLGFKVGQSSRTPEDMVRMAREDLTIRTALLEARFVWGDRELYDEARKRFWSEVVNGTERQFVAEKLAERDARHERMGGTRYVVEPNVKEGKGGLRDLQTLYWIGKYIHRARGAAELVDAGLLTETEYHGFRRAEGFLLAVRCHLHEITGRPEDRLTFDFQKQIAERMRFAERREKSAVERFMQYYFLQVKRVGSLTGVFLAQMDQQFARKRARTGLLAGFNAKSRMLKGYTVFGGKIAAPGDNWFRDDPVRLIEIFQLAEANGLEIDPRSMRQADRDSVLIKDQVRNDPRANAIFLDLLCGRNDPETALRWMNEAGVFGKFVPDFGRVNAQMQFNMYHHYTVDEHTIRAIGFLSKIEKGELAKEHPRSTREIHKVKSRRVAFVAALLHDIAKGRGGDHSILGAEVAEELCPRFGLDEDETDLVAWLVLQHLLMSSTAQKRDLTDPKTIEDFVAEVQSLERLRHLAILTSVDIRAVGPGTWNSWKGQLLGELYDAAHERLRLGHMKHHRSERVAAKKEAVREALGGKAALLEKHGRLLPDSYWIAEPENVISRNIVQYDVAREISEDLSIHCEFDEERGATLVTVIAADHPGLFYRIAGGIHLAGGNIIDARIHTTRNGWAIDNYLVQDPVGQPFAEERQLARIEQAIADAIANRGELVPKLAKRPLKQTRAGAFDVRPRVLFDNDASGRFTVIEVNARDRAALLNRLGRALFENQVIVQSAHITAYGERAADTFYVTDLTGAKITDESRMDTIRQALLDAASDARQAELEPA.

The interval 1 to 373 is uridylyltransferase; sequence MTDPKVPRQR…LAGFNAKSRM (373 aa). Positions 374–727 are uridylyl-removing; the sequence is LKGYTVFGGK…CEFDEERGAT (354 aa). Positions 489–611 constitute an HD domain; sequence VDEHTIRAIG…VQSLERLRHL (123 aa). 2 consecutive ACT domains span residues 728 to 811 and 839 to 919; these read LVTV…LAKR and VIEV…LEPA.

It belongs to the GlnD family. Requires Mg(2+) as cofactor.

The enzyme catalyses [protein-PII]-L-tyrosine + UTP = [protein-PII]-uridylyl-L-tyrosine + diphosphate. It catalyses the reaction [protein-PII]-uridylyl-L-tyrosine + H2O = [protein-PII]-L-tyrosine + UMP + H(+). Uridylyltransferase (UTase) activity is inhibited by glutamine, while glutamine activates uridylyl-removing (UR) activity. Its function is as follows. Modifies, by uridylylation and deuridylylation, the PII regulatory proteins (GlnB and homologs), in response to the nitrogen status of the cell that GlnD senses through the glutamine level. Under low glutamine levels, catalyzes the conversion of the PII proteins and UTP to PII-UMP and PPi, while under higher glutamine levels, GlnD hydrolyzes PII-UMP to PII and UMP (deuridylylation). Thus, controls uridylylation state and activity of the PII proteins, and plays an important role in the regulation of nitrogen assimilation and metabolism. The chain is Bifunctional uridylyltransferase/uridylyl-removing enzyme from Erythrobacter litoralis (strain HTCC2594).